Reading from the N-terminus, the 248-residue chain is Chromatin target of PRMT1 protein (248 aa).

N-acetylalanine is present on Ala-2. Phosphoserine is present on residues Ser-40, Ser-49, and Ser-64. Residue Lys-70 forms a Glycyl lysine isopeptide (Lys-Gly) (interchain with G-Cter in SUMO2) linkage. Residues Leu-151–Gly-204 are disordered. The interaction with PRMT1 stretch occupies residues Arg-153–Leu-206. The span at Arg-157–Arg-195 shows a compositional bias: gly residues. Positions Gly-194–Arg-203 match the GAR motif; involved in 5hmC binding motif. Phosphothreonine is present on Thr-242.

In terms of assembly, interacts with PRMT1 and PRMT5. Interacts with the 5FMC complex; the interaction is methylation-dependent. Interacts with FYTTD1, SET and PRC1 complex members CBX4, RNF2 and PHC2; the interactions are methylation-independent. Interacts with ZNF148. Interacts with WDR77 and ER. Asymmetrically methylated by PRMT1. Symmetrically methylated by PRMT5.

It localises to the nucleus. Its subcellular location is the nucleolus. The protein localises to the nucleoplasm. It is found in the nucleus speckle. Functionally, plays an important role in the ligand-dependent activation of estrogen receptor target genes. May play a role in the silencing of fetal globin genes. Recruits the 5FMC complex to ZNF148, leading to desumoylation of ZNF148 and subsequent transactivation of ZNF148 target genes. Required for the tumorigenicity of glioblastoma cells. Binds to 5-hydroxymethylcytosine (5hmC) and associates with the methylosome complex containing PRMT1, PRMT5, MEP50 and ERH. The CHTOP-methylosome complex associated with 5hmC methylates H4R3 and transactivates genes involved in glioblastomagenesis. The protein is Chromatin target of PRMT1 protein (CHTOP) of Bos taurus (Bovine).